A 377-amino-acid chain; its full sequence is Carbonic anhydrase 1 (377 aa).

Residues 1–20 (MARTGALLLVALALAGCAQA) form the signal peptide. Residues 38 to 318 (DHWDHGLNGE…HHHRRLLHNH (281 aa)) form the Alpha-carbonic anhydrase domain. 3 disulfides stabilise this stretch: Cys61–Cys264, Cys194–Cys198, and Cys296–Cys351. N-linked (GlcNAc...) asparagine glycosylation occurs at Asn101. His112 acts as the Proton acceptor in catalysis. The N-linked (GlcNAc...) asparagine glycan is linked to Asn135. 3 residues coordinate Zn(2+): His163, His165, and His182. Substrate contacts are provided by residues Thr260 and 260–261 (TT). N-linked (GlcNAc...) asparagine glycosylation occurs at Asn297.

This sequence belongs to the alpha-carbonic anhydrase family. Tetramer of two large and two small subunits linked by two disulfide bonds. Zn(2+) serves as cofactor.

The protein localises to the periplasm. The catalysed reaction is hydrogencarbonate + H(+) = CO2 + H2O. Its function is as follows. Reversible hydration of carbon dioxide. The sequence is that of Carbonic anhydrase 1 (CAH1) from Chlamydomonas reinhardtii (Chlamydomonas smithii).